A 1872-amino-acid polypeptide reads, in one-letter code: E3 ubiquitin-protein ligase UBR2 (1872 aa).

Residues Thr-96–Asn-172 form a UBR-type zinc finger. A Glycyl lysine isopeptide (Lys-Gly) (interchain with G-Cter in ubiquitin) cross-link involves residue Lys-709. Positions Arg-1134–Asp-1240 are interaction with UBC2. The segment at Asn-1203–Asn-1227 is disordered. Residues Ser-1212–Arg-1225 are compositionally biased toward low complexity. A phosphoserine mark is found at Ser-1218 and Ser-1222. An RING-type; atypical zinc finger spans residues Asp-1241 to Ser-1362.

Belongs to the E3 ubiquitin-protein ligase UBR1-like family. In terms of assembly, interacts with MUB1, RPN4 and UBC2.

It localises to the cytoplasm. It carries out the reaction S-ubiquitinyl-[E2 ubiquitin-conjugating enzyme]-L-cysteine + [acceptor protein]-L-lysine = [E2 ubiquitin-conjugating enzyme]-L-cysteine + N(6)-ubiquitinyl-[acceptor protein]-L-lysine.. The protein operates within protein modification; protein ubiquitination. In terms of biological role, E3 ubiquitin-protein ligase which probably functions outside the N-end rule pathway, since it lacks the residues essential for the degradation of N-end rule substrates. Mediates RPN4 ubiquitination and subsequent degradation. In Saccharomyces cerevisiae (strain ATCC 204508 / S288c) (Baker's yeast), this protein is E3 ubiquitin-protein ligase UBR2 (UBR2).